A 198-amino-acid chain; its full sequence is Hookworm platelet inhibitor 1 (198 aa).

Residues 1 to 17 form the signal peptide; it reads MSSYLLVLVAILGFAYA. Disulfide bonds link Cys-24–Cys-65, Cys-78–Cys-146, Cys-141–Cys-154, Cys-174–Cys-186, and Cys-177–Cys-195.

The protein belongs to the CRISP family. Monomer. As to expression, detected in cephalic glands.

Its subcellular location is the secreted. Hookworms inhibitor of platelet aggregation and adhesion. Native protein inhibits platelet aggregation induced by ADP, epinephrine, and thrombin. In addition, it prevents adhesion of resting platelets to immobilized fibrinogen and collagen. May act by binding to glycoprotein IIb/IIIa (ITGA2B/ITGB3) and integrin alpha-2/beta-1 (ITGA1/ITGB1), respectively. It is noteworthy that the recombinant protein fails to inhibit binding to fibrinogen (through ITGA2B/ITGB3) and collagen (through ITGA1/ITGB1). The sequence is that of Hookworm platelet inhibitor 1 from Ancylostoma caninum (Dog hookworm).